Consider the following 156-residue polypeptide: 3-dehydroquinate dehydratase 1 (156 aa).

Catalysis depends on Tyr-32, which acts as the Proton acceptor. The substrate site is built by Asn-84, His-90, and Asp-97. His-110 acts as the Proton donor in catalysis. Substrate contacts are provided by residues 111–112 (LS) and Arg-121.

It belongs to the type-II 3-dehydroquinase family. In terms of assembly, homododecamer.

The catalysed reaction is 3-dehydroquinate = 3-dehydroshikimate + H2O. It functions in the pathway metabolic intermediate biosynthesis; chorismate biosynthesis; chorismate from D-erythrose 4-phosphate and phosphoenolpyruvate: step 3/7. In terms of biological role, catalyzes a trans-dehydration via an enolate intermediate. This is 3-dehydroquinate dehydratase 1 (aroQ1) from Ralstonia nicotianae (strain ATCC BAA-1114 / GMI1000) (Ralstonia solanacearum).